A 267-amino-acid polypeptide reads, in one-letter code: Ribosomal RNA small subunit methyltransferase A (267 aa).

The S-adenosyl-L-methionine site is built by Asn-18, Leu-20, Gly-45, Glu-66, Asp-91, and Asn-112.

Belongs to the class I-like SAM-binding methyltransferase superfamily. rRNA adenine N(6)-methyltransferase family. RsmA subfamily.

The protein localises to the cytoplasm. The catalysed reaction is adenosine(1518)/adenosine(1519) in 16S rRNA + 4 S-adenosyl-L-methionine = N(6)-dimethyladenosine(1518)/N(6)-dimethyladenosine(1519) in 16S rRNA + 4 S-adenosyl-L-homocysteine + 4 H(+). In terms of biological role, specifically dimethylates two adjacent adenosines (A1518 and A1519) in the loop of a conserved hairpin near the 3'-end of 16S rRNA in the 30S particle. May play a critical role in biogenesis of 30S subunits. The sequence is that of Ribosomal RNA small subunit methyltransferase A from Shewanella denitrificans (strain OS217 / ATCC BAA-1090 / DSM 15013).